Reading from the N-terminus, the 61-residue chain is Sperm protamine P1 (61 aa).

The disordered stretch occupies residues 1–61 (MARYRHSRSR…RYSRRRRRRY (61 aa)).

This sequence belongs to the protamine P1 family. As to expression, testis.

It is found in the nucleus. It localises to the chromosome. Protamines substitute for histones in the chromatin of sperm during the haploid phase of spermatogenesis. They compact sperm DNA into a highly condensed, stable and inactive complex. This is Sperm protamine P1 (PRM1) from Setonix brachyurus (Quokka).